We begin with the raw amino-acid sequence, 114 residues long: MTNKTTKIQATGKYVRLSTAKTRRVLNQIKGKKYQEAILILEFMTYKPCKIIKKILESAGNNALNLKYEKQNLIIKQAFANDGPKLKRFQPRAQGRAFRIQKPTCHITINLSIN.

Belongs to the universal ribosomal protein uL22 family. Part of the 50S ribosomal subunit.

Its subcellular location is the plastid. It localises to the chloroplast. This protein binds specifically to 23S rRNA. Functionally, the globular domain of the protein is located near the polypeptide exit tunnel on the outside of the subunit, while an extended beta-hairpin is found that lines the wall of the exit tunnel in the center of the 70S ribosome. The protein is Large ribosomal subunit protein uL22c (rpl22) of Gracilaria tenuistipitata (Red alga).